The sequence spans 329 residues: MKKIFFAQCSILLLMLGSCSKMTEDMTPESVNKEASVKSATALAGSNGVCIAYYITDGRNPTFKLKDIPDKVDMVILFGLKYWSLQDTTKLPGGTGMMGSFKSYKDLDTQIRSLQSRGIKVLQNIDDDVSWQSSKPGGFASAAAYGDAIKSIVIDKWKLDGISLDIEHSGAKPNPIPTFPGYAATGYNGWYSGSMAATPAFLNVISELTKYFGTTAPNNKQLQIASGIDVYAWNKIMENFRNNFNYIQLQSYGANVSRTQLMMNYATGTNKIPASKMVFGAYAEGGTNQANDVEVAKWTPTQGAKGGMMIYTYNSNVSYANAVRDAVKN.

The or 40, or 41 signal peptide spans 1-39 (MKKIFFAQCSILLLMLGSCSKMTEDMTPESVNKEASVKS). Residues 48–329 (GVCIAYYITD…ANAVRDAVKN (282 aa)) enclose the GH18 domain. The O-linked (Man...) threonine glycan is linked to T88. E167 functions as the Proton donor in the catalytic mechanism.

The protein belongs to the glycosyl hydrolase 18 family. In terms of assembly, monomer. In terms of processing, carbohydrate at Thr-88 consists of (2-OMe)Man1-4GlcNAcU1-4GlcU1-4Glc1-4(2-OMe)GlcU1-4[(2-OMe)Rham1-2]Man.

It is found in the secreted. It catalyses the reaction an N(4)-(oligosaccharide-(1-&gt;3)-[oligosaccharide-(1-&gt;6)]-beta-D-Man-(1-&gt;4)-beta-D-GlcNAc-(1-&gt;4)-alpha-D-GlcNAc)-L-asparaginyl-[protein] + H2O = an oligosaccharide-(1-&gt;3)-[oligosaccharide-(1-&gt;6)]-beta-D-Man-(1-&gt;4)-D-GlcNAc + N(4)-(N-acetyl-beta-D-glucosaminyl)-L-asparaginyl-[protein]. Endohydrolysis of the di-N-acetylchitobiosyl unit in high-mannose glycopeptides and glycoproteins. Hydrolyzes bi- and triantennary glycans. The presence of a core-bound fucose greatly augments endo F3 activity on biantennary and, presumably, triantennary oligosaccharides. The protein is Endo-beta-N-acetylglucosaminidase F3 (endOF3) of Elizabethkingia meningoseptica (Chryseobacterium meningosepticum).